A 336-amino-acid polypeptide reads, in one-letter code: Acyl-CoA-binding domain-containing protein 4 (336 aa).

The helical; Signal-anchor transmembrane segment at 12-32 (AVIGLLFAFLVAKLISTVIAF) threads the bilayer. The tract at residues 40–88 (TRSTPTSPSAADTPAAPAPPPASLDGGHGDTSDGSGSDSDSDWEGVEST) is disordered. Over residues 42-54 (STPTSPSAADTPA) the composition is skewed to low complexity. The segment covering 78 to 88 (SDSDWEGVEST) has biased composition (acidic residues). Positions 90–178 (LDEEFSAASA…VDELFPNWSM (89 aa)) constitute an ACB domain. Residues 120-124 (YGLYK), lysine 142, lysine 146, and tyrosine 165 each bind an acyl-CoA. Asparagine 175 is a glycosylation site (N-linked (GlcNAc...) asparagine). The interval 179–202 (GSSTKRKDEDTTVSASSSKGPMGP) is disordered. Asparagine 216 carries an N-linked (GlcNAc...) asparagine glycan. ANK repeat units lie at residues 251-280 (EGRT…DVNA) and 284-313 (EGQT…DVQI).

This sequence belongs to the ACBP family. As to expression, highly expressed in leaves. Expressed at low levels in roots and seeds.

The protein localises to the endoplasmic reticulum membrane. Its function is as follows. Binds medium- and long-chain acyl-CoA esters with high affinity. Can interact in vitro with palmitoyl-CoA, linoleoyl-CoA and linolenoyl-CoA. Binds phosphatidic acid (PA) and phosphatidylcholine (PC) in vitro. May play a role in the biosynthesis of phospholipids. In Oryza sativa subsp. japonica (Rice), this protein is Acyl-CoA-binding domain-containing protein 4.